The primary structure comprises 471 residues: Argininosuccinate lyase (471 aa).

The protein belongs to the lyase 1 family. Argininosuccinate lyase subfamily.

It localises to the cytoplasm. It carries out the reaction 2-(N(omega)-L-arginino)succinate = fumarate + L-arginine. Its pathway is amino-acid biosynthesis; L-arginine biosynthesis; L-arginine from L-ornithine and carbamoyl phosphate: step 3/3. The chain is Argininosuccinate lyase from Paramagnetospirillum magneticum (strain ATCC 700264 / AMB-1) (Magnetospirillum magneticum).